We begin with the raw amino-acid sequence, 516 residues long: Maintenance of mitochondrial morphology protein 1 (516 aa).

At 1–43 (MAGSTSASLQTPYFPSSTQINPVRVDHTLPLPPAQPSLSFTQG) the chain is on the lumenal side. A helical transmembrane segment spans residues 44–64 (LLVGQLSVVLLIGAFIKFFIF). The Cytoplasmic segment spans residues 65-516 (GEAPPPPSRG…GSMPDTVTET (452 aa)). 4 disordered regions span residues 70–118 (PPSR…SSST), 295–349 (TSDQ…SKHG), 420–466 (RTGL…IDRG), and 485–516 (GGHQ…VTET). Composition is skewed to polar residues over residues 74–96 (GLSN…TDSS), 105–118 (STSN…SSST), and 295–312 (TSDQ…TTSE). The region spanning 151 to 412 (QPESLDWFNV…EPRVQVVGLP (262 aa)) is the SMP-LTD domain. A compositionally biased stretch (gly residues) spans 449 to 460 (GVSGGGGGGGSM).

It belongs to the MMM1 family. Homodimer. Component of the ER-mitochondria encounter structure (ERMES) or MDM complex, composed of MMM1, MDM10, MDM12 and MDM34. An MMM1 homodimer associates with one molecule of MDM12 on each side in a pairwise head-to-tail manner, and the SMP-LTD domains of MMM1 and MDM12 generate a continuous hydrophobic tunnel for phospholipid trafficking.

The protein resides in the endoplasmic reticulum membrane. In terms of biological role, component of the ERMES/MDM complex, which serves as a molecular tether to connect the endoplasmic reticulum (ER) and mitochondria. Components of this complex are involved in the control of mitochondrial shape and protein biogenesis, and function in nonvesicular lipid trafficking between the ER and mitochondria. The MDM12-MMM1 subcomplex functions in the major beta-barrel assembly pathway that is responsible for biogenesis of all outer membrane beta-barrel proteins, and acts in a late step after the SAM complex. The MDM10-MDM12-MMM1 subcomplex further acts in the TOM40-specific pathway after the action of the MDM12-MMM1 complex. Essential for establishing and maintaining the structure of mitochondria and maintenance of mtDNA nucleoids. The protein is Maintenance of mitochondrial morphology protein 1 of Paracoccidioides brasiliensis (strain Pb18).